Here is a 380-residue protein sequence, read N- to C-terminus: Cytochrome b (380 aa).

Helical transmembrane passes span 33–53, 77–98, 113–133, and 178–198; these read FGSL…FLAM, WLLR…YLHI, WNIG…GYVL, and FFTF…LHLL. 2 residues coordinate heme b: histidine 83 and histidine 97. Positions 182 and 196 each coordinate heme b. An a ubiquinone-binding site is contributed by histidine 201. 4 helical membrane-spanning segments follow: residues 226-246, 288-308, 320-340, and 347-367; these read YKDL…ALLN, LGGV…PTLH, SSQT…WIGG, and FIII…FFIP.

The protein belongs to the cytochrome b family. The cytochrome bc1 complex contains 3 respiratory subunits (MT-CYB, CYC1 and UQCRFS1), 2 core proteins (UQCRC1 and UQCRC2) and probably 6 low-molecular weight proteins. Heme b is required as a cofactor.

It is found in the mitochondrion inner membrane. Component of the ubiquinol-cytochrome c reductase complex (complex III or cytochrome b-c1 complex) that is part of the mitochondrial respiratory chain. The b-c1 complex mediates electron transfer from ubiquinol to cytochrome c. Contributes to the generation of a proton gradient across the mitochondrial membrane that is then used for ATP synthesis. This chain is Cytochrome b (mt-cyb), found in Lepisosteus oculatus (Spotted gar).